A 500-amino-acid chain; its full sequence is NAD(P)H-quinone oxidoreductase subunit 2, chloroplastic (500 aa).

13 helical membrane passes run 15–35, 42–62, 79–99, 109–129, 132–152, 167–187, 201–221, 247–267, 278–298, 306–326, 334–354, 377–397, and 400–420; these read ILPE…DLSL, WIIY…CLQW, FSIA…LLSI, LMEF…LCGA, LITI…LAGY, LLVG…LYGL, LIFA…CIIV, VVAF…IRII, WQFL…LVAI, MLAY…ISST, LVYM…VILF, ASCL…AGFF, and IYLF…VGLL.

Belongs to the complex I subunit 2 family. In terms of assembly, NDH is composed of at least 16 different subunits, 5 of which are encoded in the nucleus.

The protein localises to the plastid. The protein resides in the chloroplast thylakoid membrane. It catalyses the reaction a plastoquinone + NADH + (n+1) H(+)(in) = a plastoquinol + NAD(+) + n H(+)(out). The enzyme catalyses a plastoquinone + NADPH + (n+1) H(+)(in) = a plastoquinol + NADP(+) + n H(+)(out). Its function is as follows. NDH shuttles electrons from NAD(P)H:plastoquinone, via FMN and iron-sulfur (Fe-S) centers, to quinones in the photosynthetic chain and possibly in a chloroplast respiratory chain. The immediate electron acceptor for the enzyme in this species is believed to be plastoquinone. Couples the redox reaction to proton translocation, and thus conserves the redox energy in a proton gradient. The sequence is that of NAD(P)H-quinone oxidoreductase subunit 2, chloroplastic from Chaetosphaeridium globosum (Charophycean green alga).